Consider the following 115-residue polypeptide: Cytochrome c (115 aa).

The heme c site is built by C26, C29, H30, and M91.

The protein belongs to the cytochrome c family. Binds 1 heme c group covalently per subunit.

The protein resides in the mitochondrion intermembrane space. Its function is as follows. Electron carrier protein. The oxidized form of the cytochrome c heme group can accept an electron from the heme group of the cytochrome c1 subunit of cytochrome reductase. Cytochrome c then transfers this electron to the cytochrome oxidase complex, the final protein carrier in the mitochondrial electron-transport chain. The polypeptide is Cytochrome c (Theileria annulata).